The chain runs to 803 residues: Cation channel sperm-associated auxiliary subunit delta (803 aa).

Positions 1-15 are cleaved as a signal peptide; it reads MLMLMLAAVATVVRA. Residues 16-720 lie on the Extracellular side of the membrane; sequence QTVCRFRTVR…ALPVAEFRPM (705 aa). Intrachain disulfides connect C19-C365, C55-C142, C141-C148, C383-C492, C506-C698, C521-C568, and C620-C648. Residues N226, N418, N436, N468, N534, N545, and N626 are each glycosylated (N-linked (GlcNAc...) asparagine). The helical transmembrane segment at 721 to 742 threads the bilayer; sequence TSILLMVTVTLFTMWLAYAIPK. Over 743–803 the chain is Cytoplasmic; the sequence is QLRTERGRRL…QIGKKPDIKK (61 aa). The disordered stretch occupies residues 782 to 803; it reads SRRVKDQPEKIPQIGKKPDIKK.

This sequence belongs to the CATSPERD family. In terms of assembly, component of the CatSper complex or CatSpermasome composed of the core pore-forming members CATSPER1, CATSPER2, CATSPER3 and CATSPER4 as well as auxiliary members CATSPERB, CATSPERG, CATSPERD, CATSPERE, CATSPERZ, C2CD6/CATSPERT, SLCO6C1, TMEM249, TMEM262 and EFCAB9. HSPA1 may be an additional auxiliary complex member. The core complex members CATSPER1, CATSPER2, CATSPER3 and CATSPER4 form a heterotetrameric channel. The auxiliary CATSPERB, CATSPERG, CATSPERD and CATSPERE subunits form a pavilion-like structure over the pore which stabilizes the complex through interactions with CATSPER4, CATSPER3, CATSPER1 and CATSPER2 respectively. SLCO6C1 interacts with CATSPERE and TMEM262/CATSPERH interacts with CATSPERB, further stabilizing the complex. C2CD6/CATSPERT interacts at least with CATSPERD and is required for targeting the CatSper complex in the flagellar membrane.

It localises to the cell projection. The protein localises to the cilium. Its subcellular location is the flagellum membrane. Its function is as follows. Auxiliary component of the CatSper complex, a complex involved in sperm cell hyperactivation. Sperm cell hyperactivation is needed for sperm motility which is essential late in the preparation of sperm for fertilization. Required for CATSPER1 stability before intraflagellar transport and/or incorporation of the CatSper complex channel into the flagellar membrane. This chain is Cation channel sperm-associated auxiliary subunit delta, found in Rattus norvegicus (Rat).